The sequence spans 189 residues: Der GTPase-activating protein YihI (189 aa).

The interval 1 to 81 (MARKKKTRRV…ALAKKDPRLG (81 aa)) is disordered. 2 stretches are compositionally biased toward basic and acidic residues: residues 9 to 27 (RVSD…ELPK) and 35 to 46 (TRYELDAKARED). A compositionally biased stretch (polar residues) spans 60 to 71 (RHSATENNNNHQ).

The protein belongs to the YihI family. Interacts with Der.

In terms of biological role, a GTPase-activating protein (GAP) that modifies Der/EngA GTPase function. May play a role in ribosome biogenesis. The protein is Der GTPase-activating protein YihI of Pasteurella multocida (strain Pm70).